Here is an 89-residue protein sequence, read N- to C-terminus: Cell division protein ZapA (89 aa).

Belongs to the ZapA family. Type 2 subfamily. Homodimer. Interacts with FtsZ.

The protein localises to the cytoplasm. In terms of biological role, activator of cell division through the inhibition of FtsZ GTPase activity, therefore promoting FtsZ assembly into bundles of protofilaments necessary for the formation of the division Z ring. It is recruited early at mid-cell but it is not essential for cell division. In Bacillus thuringiensis (strain Al Hakam), this protein is Cell division protein ZapA.